Consider the following 355-residue polypeptide: Alanine racemase (355 aa).

Catalysis depends on lysine 37, which acts as the Proton acceptor; specific for D-alanine. The residue at position 37 (lysine 37) is an N6-(pyridoxal phosphate)lysine. Arginine 129 contributes to the substrate binding site. Tyrosine 251 serves as the catalytic Proton acceptor; specific for L-alanine. Methionine 299 contributes to the substrate binding site.

Belongs to the alanine racemase family. It depends on pyridoxal 5'-phosphate as a cofactor.

The enzyme catalyses L-alanine = D-alanine. It participates in amino-acid biosynthesis; D-alanine biosynthesis; D-alanine from L-alanine: step 1/1. Its function is as follows. Catalyzes the interconversion of L-alanine and D-alanine. May also act on other amino acids. The polypeptide is Alanine racemase (alr) (Deinococcus geothermalis (strain DSM 11300 / CIP 105573 / AG-3a)).